Reading from the N-terminus, the 366-residue chain is Ribosomal RNA large subunit methyltransferase M (366 aa).

S-adenosyl-L-methionine contacts are provided by residues S188, C221 to G224, D240, D260, and D277. K306 (proton acceptor) is an active-site residue.

The protein belongs to the class I-like SAM-binding methyltransferase superfamily. RNA methyltransferase RlmE family. RlmM subfamily. Monomer.

The protein localises to the cytoplasm. It catalyses the reaction cytidine(2498) in 23S rRNA + S-adenosyl-L-methionine = 2'-O-methylcytidine(2498) in 23S rRNA + S-adenosyl-L-homocysteine + H(+). Catalyzes the 2'-O-methylation at nucleotide C2498 in 23S rRNA. The polypeptide is Ribosomal RNA large subunit methyltransferase M (Shigella sonnei (strain Ss046)).